Reading from the N-terminus, the 237-residue chain is Ribonuclease PH (237 aa).

Residues R86 and 124–126 contribute to the phosphate site; that span reads GTR.

The protein belongs to the RNase PH family. Homohexameric ring arranged as a trimer of dimers.

It catalyses the reaction tRNA(n+1) + phosphate = tRNA(n) + a ribonucleoside 5'-diphosphate. In terms of biological role, phosphorolytic 3'-5' exoribonuclease that plays an important role in tRNA 3'-end maturation. Removes nucleotide residues following the 3'-CCA terminus of tRNAs; can also add nucleotides to the ends of RNA molecules by using nucleoside diphosphates as substrates, but this may not be physiologically important. Probably plays a role in initiation of 16S rRNA degradation (leading to ribosome degradation) during starvation. This chain is Ribonuclease PH, found in Bradyrhizobium diazoefficiens (strain JCM 10833 / BCRC 13528 / IAM 13628 / NBRC 14792 / USDA 110).